The following is a 207-amino-acid chain: dTDP-4-dehydrorhamnose 3-epimerase (207 aa).

Residues R23, D28, 47-49, and R59 each bind substrate; that span reads QAN. The active-site Proton acceptor is the H62. Substrate is bound by residues K72 and H119. The active-site Proton donor is the Y132. Substrate is bound by residues E143 and R167.

This sequence belongs to the dTDP-4-dehydrorhamnose 3,5-epimerase family.

It functions in the pathway antibiotic biosynthesis; novobiocin biosynthesis. Its function is as follows. dTDP-6-deoxy-D-xylo-4-hexulose 3-epimerase that acts together with NovU to catalyze the formation of dTDP-4-keto-6-deoxy-5-C-methyl-L-lyxo-hexose from dTDP-4-keto-6-deoxy-D-glucose in the novobiocin biosynthesis pathway, an aminocoumarin family antibiotic that targets bacterial DNA gyrases. This Streptomyces niveus (Streptomyces spheroides) protein is dTDP-4-dehydrorhamnose 3-epimerase.